The sequence spans 62 residues: Neurotoxin 3 (62 aa).

Positions Leu1 to Gly16 are enriched in polar residues. A disordered region spans residues Leu1–Thr22. 4 cysteine pairs are disulfide-bonded: Cys3–Cys24, Cys17–Cys41, Cys43–Cys54, and Cys55–Cys60.

Belongs to the three-finger toxin family. Short-chain subfamily. Type I alpha-neurotoxin sub-subfamily. In terms of tissue distribution, expressed by the venom gland.

The protein localises to the secreted. Functionally, binds to muscle nicotinic acetylcholine receptor (nAChR) and inhibit acetylcholine from binding to the receptor, thereby impairing neuromuscular transmission. The chain is Neurotoxin 3 from Naja sputatrix (Malayan spitting cobra).